Here is a 958-residue protein sequence, read N- to C-terminus: Translation initiation factor IF-2 (958 aa).

Positions 50–67 (FKPAAAPKVEAKPAAPKV) are enriched in low complexity. 2 disordered regions span residues 50-224 (FKPA…RIDF) and 288-374 (EVVP…HELP). Composition is skewed to basic and acidic residues over residues 68–89 (SAEK…EEAK), 96–118 (SAEK…EAKP), and 138–153 (FKAE…AERR). Over residues 157–169 (KGNNRDQQQNGNR) the composition is skewed to low complexity. Basic and acidic residues-rich tracts occupy residues 185 to 195 (RDNRRFNDQAK) and 290 to 323 (VPEK…DGPR). Low complexity predominate over residues 337–346 (NQKNSNWNNN). Residues 365-374 (VTERKFHELP) show a composition bias toward basic and acidic residues. The 168-residue stretch at 460–627 (ERPPVVTIMG…TVLLVAEIQE (168 aa)) folds into the tr-type G domain. The G1 stretch occupies residues 469–476 (GHVDHGKT). 469–476 (GHVDHGKT) lines the GTP pocket. The interval 494–498 (GITQH) is G2. The segment at 515 to 518 (DTPG) is G3. GTP contacts are provided by residues 515 to 519 (DTPGH) and 569 to 572 (NKID). The G4 stretch occupies residues 569 to 572 (NKID). The segment at 605-607 (SAK) is G5.

It belongs to the TRAFAC class translation factor GTPase superfamily. Classic translation factor GTPase family. IF-2 subfamily.

It localises to the cytoplasm. Functionally, one of the essential components for the initiation of protein synthesis. Protects formylmethionyl-tRNA from spontaneous hydrolysis and promotes its binding to the 30S ribosomal subunits. Also involved in the hydrolysis of GTP during the formation of the 70S ribosomal complex. The protein is Translation initiation factor IF-2 of Streptococcus pneumoniae serotype 4 (strain ATCC BAA-334 / TIGR4).